Reading from the N-terminus, the 519-residue chain is Anthranilate synthase component 1 (519 aa).

L-tryptophan contacts are provided by residues S39 and 290–292 (PYM). 327–328 (GT) is a binding site for chorismate. Residue E360 participates in Mg(2+) binding. Chorismate contacts are provided by residues Y448, R468, 482–484 (GAG), and G484. Position 497 (E497) interacts with Mg(2+).

This sequence belongs to the anthranilate synthase component I family. Heterotetramer consisting of two non-identical subunits: a beta subunit (TrpG) and a large alpha subunit (TrpE). Mg(2+) serves as cofactor.

The enzyme catalyses chorismate + L-glutamine = anthranilate + pyruvate + L-glutamate + H(+). Its pathway is amino-acid biosynthesis; L-tryptophan biosynthesis; L-tryptophan from chorismate: step 1/5. With respect to regulation, feedback inhibited by tryptophan. Functionally, part of a heterotetrameric complex that catalyzes the two-step biosynthesis of anthranilate, an intermediate in the biosynthesis of L-tryptophan. In the first step, the glutamine-binding beta subunit (TrpG) of anthranilate synthase (AS) provides the glutamine amidotransferase activity which generates ammonia as a substrate that, along with chorismate, is used in the second step, catalyzed by the large alpha subunit of AS (TrpE) to produce anthranilate. In the absence of TrpG, TrpE can synthesize anthranilate directly from chorismate and high concentrations of ammonia. The polypeptide is Anthranilate synthase component 1 (trpE) (Serratia marcescens).